The sequence spans 291 residues: uncharacterized protein (291 aa).

10 helical membrane-spanning segments follow: residues 1–21 (MHNL…LKIA), 26–46 (IIIE…SYFL), 67–87 (PIFL…SKAV), 95–115 (SDAA…LIFH), 117–137 (TLSQ…FCLL), 149–169 (FKGV…DILF), 179–199 (FPAT…IYLF), 208–228 (SSVI…LFYI), 241–261 (VFAG…ALVF), and 270–290 (WLGI…DKII). Positions 107-138 (ILAAFLIFHETLSQSKIIGVVLAFIGLFCLLT) constitute an EamA domain.

It is found in the cell membrane. This is an uncharacterized protein from Haemophilus influenzae (strain ATCC 51907 / DSM 11121 / KW20 / Rd).